Consider the following 197-residue polypeptide: ATP-dependent Clp protease proteolytic subunit (197 aa).

Serine 98 serves as the catalytic Nucleophile. The active site involves histidine 123.

The protein belongs to the peptidase S14 family. In terms of assembly, fourteen ClpP subunits assemble into 2 heptameric rings which stack back to back to give a disk-like structure with a central cavity, resembling the structure of eukaryotic proteasomes.

It is found in the cytoplasm. It catalyses the reaction Hydrolysis of proteins to small peptides in the presence of ATP and magnesium. alpha-casein is the usual test substrate. In the absence of ATP, only oligopeptides shorter than five residues are hydrolyzed (such as succinyl-Leu-Tyr-|-NHMec, and Leu-Tyr-Leu-|-Tyr-Trp, in which cleavage of the -Tyr-|-Leu- and -Tyr-|-Trp bonds also occurs).. Cleaves peptides in various proteins in a process that requires ATP hydrolysis. Has a chymotrypsin-like activity. Plays a major role in the degradation of misfolded proteins. In Pediococcus pentosaceus (strain ATCC 25745 / CCUG 21536 / LMG 10740 / 183-1w), this protein is ATP-dependent Clp protease proteolytic subunit.